We begin with the raw amino-acid sequence, 311 residues long: Meteorin-like protein (311 aa).

Residues 1 to 13 are compositionally biased toward low complexity; it reads MRGAARAAWGRAG. The tract at residues 1–24 is disordered; the sequence is MRGAARAAWGRAGQPWPRPPAPGP. The first 45 residues, 1 to 45, serve as a signal peptide directing secretion; sequence MRGAARAAWGRAGQPWPRPPAPGPPPPPLPLLLLLLAGLLGGAGA. Cystine bridges form between C52-C75, C107-C143, C188-C260, C191-C284, and C201-C306.

This sequence belongs to the meteorin family. As to expression, highly expressed in the skeletal muscle, in subcutaneous adipose tissue, epididymal white adipose tissue depots and heart. Also expressed in brown adipose tissues and kidney.

The protein resides in the secreted. Its function is as follows. Hormone induced following exercise or cold exposure that promotes energy expenditure. Induced either in the skeletal muscle after exercise or in adipose tissue following cold exposure and is present in the circulation. Able to stimulate energy expenditure associated with the browning of the white fat depots and improves glucose tolerance. Does not promote an increase in a thermogenic gene program via direct action on adipocytes, but acts by stimulating several immune cell subtypes to enter the adipose tissue and activate their prothermogenic actions. Stimulates an eosinophil-dependent increase in IL4 expression and promotes alternative activation of adipose tissue macrophages, which are required for the increased expression of the thermogenic and anti-inflammatory gene programs in fat. Required for some cold-induced thermogenic responses, suggesting a role in metabolic adaptations to cold temperatures. In Homo sapiens (Human), this protein is Meteorin-like protein (METRNL).